A 262-amino-acid chain; its full sequence is Acyl-[acyl-carrier-protein]--UDP-N-acetylglucosamine O-acyltransferase (262 aa).

This sequence belongs to the transferase hexapeptide repeat family. LpxA subfamily. As to quaternary structure, homotrimer.

It is found in the cytoplasm. It catalyses the reaction a (3R)-hydroxyacyl-[ACP] + UDP-N-acetyl-alpha-D-glucosamine = a UDP-3-O-[(3R)-3-hydroxyacyl]-N-acetyl-alpha-D-glucosamine + holo-[ACP]. It functions in the pathway glycolipid biosynthesis; lipid IV(A) biosynthesis; lipid IV(A) from (3R)-3-hydroxytetradecanoyl-[acyl-carrier-protein] and UDP-N-acetyl-alpha-D-glucosamine: step 1/6. Involved in the biosynthesis of lipid A, a phosphorylated glycolipid that anchors the lipopolysaccharide to the outer membrane of the cell. This chain is Acyl-[acyl-carrier-protein]--UDP-N-acetylglucosamine O-acyltransferase, found in Yersinia pseudotuberculosis serotype O:1b (strain IP 31758).